Reading from the N-terminus, the 273-residue chain is Shikimate dehydrogenase (NADP(+)) (273 aa).

Shikimate is bound by residues 18 to 20 (SKS) and Thr-65. Lys-69 serves as the catalytic Proton acceptor. Glu-81 is an NADP(+) binding site. Shikimate is bound by residues Asn-90 and Asp-105. NADP(+) is bound by residues 130–134 (GAGGA), 154–159 (NRTHSK), and Met-217. Tyr-219 is a shikimate binding site. Gly-240 contacts NADP(+).

This sequence belongs to the shikimate dehydrogenase family. Homodimer.

The catalysed reaction is shikimate + NADP(+) = 3-dehydroshikimate + NADPH + H(+). It functions in the pathway metabolic intermediate biosynthesis; chorismate biosynthesis; chorismate from D-erythrose 4-phosphate and phosphoenolpyruvate: step 4/7. In terms of biological role, involved in the biosynthesis of the chorismate, which leads to the biosynthesis of aromatic amino acids. Catalyzes the reversible NADPH linked reduction of 3-dehydroshikimate (DHSA) to yield shikimate (SA). This chain is Shikimate dehydrogenase (NADP(+)), found in Herminiimonas arsenicoxydans.